We begin with the raw amino-acid sequence, 66 residues long: MLNLTLTFLVVALIAAFLGFSGIAASAAAIAKILFCIFIVCFILVWPNKTGLVPVQEYPGRSCLHL.

2 consecutive transmembrane segments (helical) span residues 4–24 (LTLT…SGIA) and 28–47 (AAIA…LVWP).

The protein belongs to the UPF0391 family.

The protein resides in the cell membrane. This chain is UPF0391 membrane protein AM1_5042, found in Acaryochloris marina (strain MBIC 11017).